The chain runs to 406 residues: Lysine-specific demethylase 8 (406 aa).

Residues Lys143–Ser152 are compositionally biased toward basic and acidic residues. Positions Lys143–Glu162 are disordered. A JmjC domain is found at Asp270–Ser406. Positions 311 and 313 each coordinate Fe cation.

Fe(2+) is required as a cofactor.

It localises to the nucleus. It carries out the reaction N(6),N(6)-dimethyl-L-lysyl(36)-[histone H3] + 2 2-oxoglutarate + 2 O2 = L-lysyl(36)-[histone H3] + 2 formaldehyde + 2 succinate + 2 CO2. Its function is as follows. Histone demethylase required for G2/M phase cell cycle progression. Specifically demethylates dimethylated 'Lys-36' (H3K36me2) of histone H3, an epigenetic repressive mark, thereby acting as a transcription activator. May play a role in the regulation of the circadian clock. In Danio rerio (Zebrafish), this protein is Lysine-specific demethylase 8 (kdm8).